Here is a 552-residue protein sequence, read N- to C-terminus: CTP synthase (552 aa).

An amidoligase domain region spans residues 1 to 270 (MTKYVFVTGG…DRIICEELKL (270 aa)). Ser-13 serves as a coordination point for CTP. Residue Ser-13 participates in UTP binding. ATP contacts are provided by residues 14–19 (SLGKGI) and Asp-71. Mg(2+) is bound by residues Asp-71 and Glu-144. Residues 151–153 (DIE), 191–196 (KTKPTQ), and Lys-227 each bind CTP. UTP is bound by residues 191-196 (KTKPTQ) and Lys-227. In terms of domain architecture, Glutamine amidotransferase type-1 spans 295-547 (TIGMVGKYVD…VEAALANKQA (253 aa)). An L-glutamine-binding site is contributed by Gly-356. The active-site Nucleophile; for glutamine hydrolysis is Cys-383. L-glutamine is bound by residues 384-387 (LGMQ), Glu-407, and Arg-473. Active-site residues include His-520 and Glu-522.

The protein belongs to the CTP synthase family. As to quaternary structure, homotetramer.

The enzyme catalyses UTP + L-glutamine + ATP + H2O = CTP + L-glutamate + ADP + phosphate + 2 H(+). It carries out the reaction L-glutamine + H2O = L-glutamate + NH4(+). The catalysed reaction is UTP + NH4(+) + ATP = CTP + ADP + phosphate + 2 H(+). It participates in pyrimidine metabolism; CTP biosynthesis via de novo pathway; CTP from UDP: step 2/2. Allosterically activated by GTP, when glutamine is the substrate; GTP has no effect on the reaction when ammonia is the substrate. The allosteric effector GTP functions by stabilizing the protein conformation that binds the tetrahedral intermediate(s) formed during glutamine hydrolysis. Inhibited by the product CTP, via allosteric rather than competitive inhibition. Functionally, catalyzes the ATP-dependent amination of UTP to CTP with either L-glutamine or ammonia as the source of nitrogen. Regulates intracellular CTP levels through interactions with the four ribonucleotide triphosphates. This Burkholderia ambifaria (strain MC40-6) protein is CTP synthase.